Here is a 37-residue protein sequence, read N- to C-terminus: Large ribosomal subunit protein bL36 (37 aa).

Belongs to the bacterial ribosomal protein bL36 family.

In Synechococcus sp. (strain RCC307), this protein is Large ribosomal subunit protein bL36.